A 224-amino-acid polypeptide reads, in one-letter code: Fibrillarin-like rRNA/tRNA 2'-O-methyltransferase (224 aa).

Residues 82 to 83 (TT), 100 to 101 (EF), 125 to 126 (DA), and 145 to 148 (DVAQ) each bind S-adenosyl-L-methionine.

The protein belongs to the methyltransferase superfamily. Fibrillarin family. As to quaternary structure, interacts with nop5. Component of box C/D small ribonucleoprotein (sRNP) particles that contain rpl7ae, FlpA and nop5, plus a guide RNA.

Its function is as follows. Involved in pre-rRNA and tRNA processing. Utilizes the methyl donor S-adenosyl-L-methionine to catalyze the site-specific 2'-hydroxyl methylation of ribose moieties in rRNA and tRNA. Site specificity is provided by a guide RNA that base pairs with the substrate. Methylation occurs at a characteristic distance from the sequence involved in base pairing with the guide RNA. This is Fibrillarin-like rRNA/tRNA 2'-O-methyltransferase from Methanothermobacter thermautotrophicus (strain ATCC 29096 / DSM 1053 / JCM 10044 / NBRC 100330 / Delta H) (Methanobacterium thermoautotrophicum).